Consider the following 45-residue polypeptide: Photosystem II reaction center protein K (45 aa).

Residues 1 to 8 (MEGILFLA) constitute a propeptide that is removed on maturation. A helical transmembrane segment spans residues 24 to 44 (APVIPVFFLLLAFVWQAAVGF).

It belongs to the PsbK family. As to quaternary structure, PSII is composed of 1 copy each of membrane proteins PsbA, PsbB, PsbC, PsbD, PsbE, PsbF, PsbH, PsbI, PsbJ, PsbK, PsbL, PsbM, PsbT, PsbX, PsbY, PsbZ, Psb30/Ycf12, at least 3 peripheral proteins of the oxygen-evolving complex and a large number of cofactors. It forms dimeric complexes.

It is found in the plastid. The protein resides in the chloroplast thylakoid membrane. In terms of biological role, one of the components of the core complex of photosystem II (PSII). PSII is a light-driven water:plastoquinone oxidoreductase that uses light energy to abstract electrons from H(2)O, generating O(2) and a proton gradient subsequently used for ATP formation. It consists of a core antenna complex that captures photons, and an electron transfer chain that converts photonic excitation into a charge separation. This is Photosystem II reaction center protein K from Guillardia theta (Cryptophyte).